Here is a 347-residue protein sequence, read N- to C-terminus: Fructose-1,6-bisphosphatase (347 aa).

AMP contacts are provided by residues 19–23 (ILQEQ) and 44–48 (SGELS). Positions 85 and 114 each coordinate Mg(2+). Residue 127 to 128 (SY) participates in AMP binding. Mg(2+)-binding residues include Asp-133, Ile-135, and Asp-136. 136–139 (DGSS) provides a ligand contact to substrate. Lys-155 is an AMP binding site. Substrate is bound by residues 227–230 (NEGY), 258–263 (RYIGSM), Tyr-279, and 288–290 (KLR). Glu-294 contacts Mg(2+).

It belongs to the FBPase class 1 family. As to quaternary structure, homotetramer. Mg(2+) serves as cofactor.

It catalyses the reaction beta-D-fructose 1,6-bisphosphate + H2O = beta-D-fructose 6-phosphate + phosphate. Its pathway is carbohydrate biosynthesis; gluconeogenesis. Its activity is regulated as follows. Subject to complex allosteric regulation. The enzyme can assume an active R-state, or an inactive T-state. Intermediate conformations may exist. AMP acts as allosteric inhibitor. AMP binding affects the turnover of bound substrate and not the affinity for substrate. The protein is Fructose-1,6-bisphosphatase (fbp1) of Schizosaccharomyces pombe (strain 972 / ATCC 24843) (Fission yeast).